A 1096-amino-acid polypeptide reads, in one-letter code: Cation-transporting ATPase 5 (1096 aa).

At 1–19 (MDSIELKQLVPENDSEPGT) the chain is on the cytoplasmic side. The helical transmembrane segment at 20 to 41 (PRQLLFQHYDISNEETIGIKPF) threads the bilayer. At 42-47 (KSIPAK) the chain is on the lumenal side. Residues 48–70 (VYILRVTEILTLGLLHLILTWLP) traverse the membrane as a helical segment. Residues 71 to 193 (EFRLKWIEAP…LVSTKKSIVT (123 aa)) lie on the Cytoplasmic side of the membrane. A helical membrane pass occupies residues 194–216 (ILLNEVLHPFYLFQAVSVLIWLC). The Lumenal segment spans residues 217–220 (DSFV). The helical transmembrane segment at 221-238 (FYSCCIVFISSYSIFLSV) threads the bilayer. The Cytoplasmic segment spans residues 239 to 391 (KESKESENRI…NLRPSQLYLD (153 aa)). Residues 392–412 (SMSFLKTMAILSFVSIVFIAI) form a helical membrane-spanning segment. Topologically, residues 413–425 (YLNLYNASFGHVV) are lumenal. A helical membrane pass occupies residues 426–447 (LRSLDVLTILVPPALPATLSVG). Over 448–895 (IANSIARLSR…SLILSHRCFQ (448 aa)) the chain is Cytoplasmic. The active-site 4-aspartylphosphate intermediate is Asp-480. Asp-838 and Asp-842 together coordinate Mg(2+). The chain crosses the membrane as a helical span at residues 896–915 (YMVLCAIVQFSGVFFLYLKN). The Lumenal segment spans residues 916–922 (YNFNDNQ). A helical membrane pass occupies residues 923 to 940 (FLFMDLLIIFPLSAAMSY). The Cytoplasmic segment spans residues 941-958 (FDPAQNLTSNRPNSTLFG). The helical transmembrane segment at 959–982 (KGRVKDLGIQSVLIWLSHGLLTLI) threads the bilayer. Residues 983 to 1003 (LHELNWVELPEWQLEKSNTKN) lie on the Lumenal side of the membrane. Residues 1004-1026 (VLVTSIFLLSSLQYLGICIGINQ) traverse the membrane as a helical segment. Residues 1027-1040 (SSEFLSPIWKKKTY) are Cytoplasmic-facing. A helical transmembrane segment spans residues 1041-1060 (VCLCTTIGLCNIYLCFANEN). Residues 1061-1075 (HIISRCLQITRLPTL) lie on the Lumenal side of the membrane. A helical transmembrane segment spans residues 1076-1096 (YRFIILFMGVISCCLTSILNM).

It belongs to the cation transport ATPase (P-type) (TC 3.A.3) family. Type V subfamily.

The protein resides in the endoplasmic reticulum membrane. It is found in the golgi apparatus membrane. The enzyme catalyses ATP + H2O = ADP + phosphate + H(+). Plays a role in regulating calcium and manganese homeostasis responsible for cell cycle progression. In Schizosaccharomyces pombe (strain 972 / ATCC 24843) (Fission yeast), this protein is Cation-transporting ATPase 5 (cta5).